Reading from the N-terminus, the 434-residue chain is Fc receptor-like protein 6 (434 aa).

The signal sequence occupies residues 1–19 (MLLWTAVLLFVPCVGKTVW). 3 Ig-like C2-type domains span residues 20–95 (LYLQ…QTFT), 111–197 (PPVL…PQLE), and 207–293 (PVLT…KKLS). At 20 to 307 (LYLQAWPNPV…QVLFTPASNW (288 aa)) the chain is on the extracellular side. 3 disulfides stabilise this stretch: Cys39-Cys83, Cys132-Cys180, and Cys228-Cys276. An N-linked (GlcNAc...) asparagine glycan is attached at Asn65. N-linked (GlcNAc...) asparagine glycosylation is present at Asn273. Residues 308-328 (LVPWLPASLLGLMVIAAALLV) traverse the membrane as a helical segment. At 329–434 (YVRSWRKAGP…PLSDCEEVLC (106 aa)) the chain is on the cytoplasmic side. Positions 369–374 (VVYSVV) match the ITIM motif motif. A Phosphotyrosine modification is found at Tyr371.

In terms of assembly, interacts (tyrosine phosphorylated) with PTPN11. Interacts (tyrosine phosphorylated) with PTPN6, INPP5D, INPPL1 and GRB2. Interacts with class II MHC HLA-DR when the alpha chain is associated with a beta-1, beta-4 or a beta-5 but not a beta-3 chain. Phosphorylated on Tyr residues. Tyrosine phosphorylation induces association with phosphatase PTPN11, PTPN6, INPP5D, INPPL1 and GRB2. In terms of tissue distribution, expressed by cytolytic cells including NK cells, effector and effector-memory CD8(+) T-cells, and a subset of NKT cells (at protein level). Also expressed in gamma delta T cells and in a rare subset of effector CD4(+) T-cells (at protein level). Expressed in spleen, skin, peripheral blood leukocytes, liver, lung, bone marrow, small intestine and placenta. Expression among T-cells is greatly expanded in HIV-1 infected individuals, and includes not only effector and effector-memory CD8(+) T-cells but also populations of CD4(+) T-cells. Expression among CD8(+) T-cells and NK cells is expanded in individuals with chronic lymphocytic leukemia (CLL) but is reduced in PBMCs from patients with acute (AML), chronic myeloid leukemia (CML) and non-Hodgkin's lymphoma. Expression is higher in PBMCs and/or CD3(+) cells of patients with autoimmune diseases, such as rheumatoid arthritis (RA), systemic lupus erythematosus (SLE) and idiopathic thrombocytopenia purpura (ITP). In contrast, expression in CD3(+) cells from patients with lupus anticoagulans (LA) is higher.

The protein resides in the cell membrane. In terms of biological role, acts as a MHC class II receptor. When stimulated on its own, does not play a role in cytokine production or the release of cytotoxic granules by NK cells and cytotoxic CD8(+) T cells. Does not act as an Fc receptor. The sequence is that of Fc receptor-like protein 6 (FCRL6) from Homo sapiens (Human).